A 270-amino-acid polypeptide reads, in one-letter code: Imidazoleglycerol-phosphate dehydratase 1, chloroplastic (270 aa).

A chloroplast-targeting transit peptide spans 1–62; that stretch reads MELSSASAIL…QSQLRQSISC (62 aa). At S63 the chain carries N-acetylserine. Substrate is bound by residues E84, 110–118, 136–140, R162, and R184; these read HMLDQLASH and HHTNE. Mn(2+)-binding residues include H110, H136, H137, and E140. Residues H208, H232, H233, and E236 each contribute to the Mn(2+) site. Substrate-binding positions include 232–240 and 262–264; these read HHIIEATFK and SSK. The tract at residues 250–270 is disordered; sequence TETDPRRGGTIPSSKGVLSRS.

This sequence belongs to the imidazoleglycerol-phosphate dehydratase family. The cofactor is Mn(2+).

Its subcellular location is the plastid. The protein localises to the chloroplast. It catalyses the reaction D-erythro-1-(imidazol-4-yl)glycerol 3-phosphate = 3-(imidazol-4-yl)-2-oxopropyl phosphate + H2O. It functions in the pathway amino-acid biosynthesis; L-histidine biosynthesis; L-histidine from 5-phospho-alpha-D-ribose 1-diphosphate: step 6/9. The protein is Imidazoleglycerol-phosphate dehydratase 1, chloroplastic of Arabidopsis thaliana (Mouse-ear cress).